We begin with the raw amino-acid sequence, 333 residues long: Adenosine deaminase (333 aa).

Zn(2+) contacts are provided by histidine 12 and histidine 14. 3 residues coordinate substrate: histidine 14, aspartate 16, and glycine 170. A Zn(2+)-binding site is contributed by histidine 197. Glutamate 200 functions as the Proton donor in the catalytic mechanism. Zn(2+) is bound at residue aspartate 278. Aspartate 279 is a substrate binding site.

It belongs to the metallo-dependent hydrolases superfamily. Adenosine and AMP deaminases family. Adenosine deaminase subfamily. Zn(2+) is required as a cofactor.

It catalyses the reaction adenosine + H2O + H(+) = inosine + NH4(+). It carries out the reaction 2'-deoxyadenosine + H2O + H(+) = 2'-deoxyinosine + NH4(+). In terms of biological role, catalyzes the hydrolytic deamination of adenosine and 2-deoxyadenosine. In Escherichia coli (strain SE11), this protein is Adenosine deaminase.